The sequence spans 427 residues: Probable threonylcarbamoyladenosine tRNA methylthiotransferase (427 aa).

Positions 12-118 (MRVYVEGYGC…AGEILKNYVE (107 aa)) constitute an MTTase N-terminal domain. [4Fe-4S] cluster-binding residues include Cys21, Cys57, Cys86, Cys155, Cys159, and Cys162. Residues 141-370 (LKPSLITPLP…DKLRRELSYL (230 aa)) form the Radical SAM core domain. The TRAM domain maps to 373–427 (KKYIGKAMKVLVLDEGKGYTDNFKVVKFEGGEVGEFRKVKITDAKTFGLKGELIL).

It belongs to the methylthiotransferase family. CDKAL1 subfamily. It depends on [4Fe-4S] cluster as a cofactor.

The enzyme catalyses N(6)-L-threonylcarbamoyladenosine(37) in tRNA + (sulfur carrier)-SH + AH2 + 2 S-adenosyl-L-methionine = 2-methylsulfanyl-N(6)-L-threonylcarbamoyladenosine(37) in tRNA + (sulfur carrier)-H + 5'-deoxyadenosine + L-methionine + A + S-adenosyl-L-homocysteine + 2 H(+). Functionally, catalyzes the methylthiolation of N6-threonylcarbamoyladenosine (t(6)A), leading to the formation of 2-methylthio-N6-threonylcarbamoyladenosine (ms(2)t(6)A) at position 37 in tRNAs that read codons beginning with adenine. In Methanocaldococcus jannaschii (strain ATCC 43067 / DSM 2661 / JAL-1 / JCM 10045 / NBRC 100440) (Methanococcus jannaschii), this protein is Probable threonylcarbamoyladenosine tRNA methylthiotransferase.